A 72-amino-acid chain; its full sequence is QVFDQACKGIYDRAIFKKLDRVCEDCYNLYRKPYVATTCRQNCYANSVFRQCLDDLLLIDVVDEYISGVQTV.

Gln-1 carries the post-translational modification Pyrrolidone carboxylic acid. Phe-3 carries the D-phenylalanine; in form CHH-II modification. 3 cysteine pairs are disulfide-bonded: Cys-7–Cys-43, Cys-23–Cys-39, and Cys-26–Cys-52. Valine amide is present on Val-72.

Stereoinversion of L-Phe (in CHH-I) to D-Phe (in CHH-II) the two forms are present in a ratio 3:1 (CHH-I/CHH-II). In terms of tissue distribution, produced by the medulla terminalis X-organ in the eyestalks and transported to the sinus gland where they are stored and released.

It is found in the secreted. In terms of biological role, hormone found in the sinus gland of isopods and decapods which controls the blood sugar level. Has a secretagogue action over the amylase released from the midgut gland. May act as a stress hormone and may be involved in the control of molting and reproduction. The polypeptide is Crustacean hyperglycemic hormone (Procambarus bouvieri (Mexican crayfish)).